Consider the following 229-residue polypeptide: Germin-like protein 3-6 (229 aa).

A signal peptide spans 1 to 31 (MEHSFKTIAAGVVIVVLLLQQAPVLIRATDA). Cysteine 38 and cysteine 53 are disulfide-bonded. Residues 67–219 (SKIATGGDVN…ALRVDAGVVE (153 aa)) form the Cupin type-1 domain. Asparagine 80 and asparagine 83 each carry an N-linked (GlcNAc...) asparagine glycan. The Mn(2+) site is built by histidine 116, histidine 118, glutamate 123, and histidine 165.

It belongs to the germin family. As to quaternary structure, oligomer (believed to be a pentamer but probably hexamer).

Its subcellular location is the secreted. The protein localises to the extracellular space. The protein resides in the apoplast. Functionally, may play a role in plant defense. Probably has no oxalate oxidase activity even if the active site is conserved. The polypeptide is Germin-like protein 3-6 (Oryza sativa subsp. japonica (Rice)).